The primary structure comprises 111 residues: Inner membrane protein YdgC (111 aa).

The Cytoplasmic segment spans residues 1–26; it reads MGLVIKAALGALVVLLIGVLAKTKNY. A helical transmembrane segment spans residues 27–47; it reads YIAGLIPLFPTFALIAHYIVA. At 48–58 the chain is on the periplasmic side; that stretch reads SERGIEALRAT. A helical transmembrane segment spans residues 59 to 79; the sequence is IIFSMWSIIPYFVYLVSLWYF. The Cytoplasmic segment spans residues 80 to 87; the sequence is TGMMRLPA. The helical transmembrane segment at 88–108 threads the bilayer; the sequence is AFVGSVACWGISAWVLIICWI. Topologically, residues 109–111 are periplasmic; it reads KLH.

To P.aeruginosa GlpM.

The protein localises to the cell inner membrane. In Escherichia coli O157:H7, this protein is Inner membrane protein YdgC (ydgC).